Here is a 135-residue protein sequence, read N- to C-terminus: Large ribosomal subunit protein uL18 (135 aa).

The disordered stretch occupies residues 1–23; the sequence is MSQTANQKAKRIPLGKDASTKRR.

It belongs to the universal ribosomal protein uL18 family. As to quaternary structure, part of the 50S ribosomal subunit; part of the 5S rRNA/L5/L18/L25 subcomplex. Contacts the 5S and 23S rRNAs.

In terms of biological role, this is one of the proteins that bind and probably mediate the attachment of the 5S RNA into the large ribosomal subunit, where it forms part of the central protuberance. The polypeptide is Large ribosomal subunit protein uL18 (Rhodococcus jostii (strain RHA1)).